A 485-amino-acid chain; its full sequence is MNEYPKKRKRKTLHPSRYSDSSGISRIADGVSGIFSDHCYSVCSMRQPDLKYFDNKDDDSDPETANDLPKFADGTKARNRNQSYLVPSPVLRILDHTVFSTEKSTEVEICDEECASPESVHQHTQEESPIEVHTSEDVPIAVEVHAISEDYDIEAENNSSESLQDQADEEPPAKLCKILDKGQALNVTAQQKWPLLRANSSGLYKCELCEFNSKYFSDLKQHVILKHKRTDSNVCRVCKESFSTNMLLIEHAKLHEEDPYICKYCDYKTVIFENLSQHIADTHFSDHLYWCEQCDVQFSSSSELYLHFQEHSRDEQYLCQFCEHETGDPEDLHSHVVNEHARRLIELSDKCGSGGHGQCSLLSKITFDKCKNFFVCQVCGFRSRLHTNVNRHVAIEHTKIFPHVCDDCGKGFSSMLEYCKHLNSHLSEGIYLCQYCEYSTGQIDDLKIHLDFKHSADLPHKCSECLMRFGNERDLLGHLQVHETT.

Residues 1 to 14 (MNEYPKKRKRKTLH) are compositionally biased toward basic residues. 2 disordered regions span residues 1 to 23 (MNEY…DSSG) and 54 to 80 (DNKD…ARNR). Ser60 bears the Phosphoserine mark. A Glycyl lysine isopeptide (Lys-Gly) (interchain with G-Cter in SUMO2) cross-link involves residue Lys76. Position 88 is a phosphoserine (Ser88). A disordered region spans residues 115–136 (ASPESVHQHTQEESPIEVHTSE). Glycyl lysine isopeptide (Lys-Gly) (interchain with G-Cter in SUMO2) cross-links involve residues Lys177, Lys181, and Lys226. 8 consecutive C2H2-type zinc fingers follow at residues 204–227 (YKCE…ILKH), 233–255 (NVCR…AKLH), 260–283 (YICK…ADTH), 289–311 (YWCE…FQEH), 374–397 (FVCQ…AIEH), 403–425 (HVCD…LNSH), 431–454 (YLCQ…DFKH), and 460–482 (HKCS…LQVH). The segment at 371–455 (KNFFVCQVCG…LKIHLDFKHS (85 aa)) is interaction with CTNNA2.

The protein belongs to the krueppel C2H2-type zinc-finger protein family. In terms of assembly, interacts with CTNNA2.

Its subcellular location is the nucleus. Binds DNA and may function as a transcriptional repressor. This is Zinc finger protein 639 (Znf639) from Mus musculus (Mouse).